The chain runs to 218 residues: MQRARCYLIGETAVVLELEPPVTLASQKRIWRLAQRLVDMPNVVEAIPGMNNITVILRNPESLALDAIERLQRWWEESEALEPESRFIEIPVVYGGAGGPDLAVVAAHCGLSEKQVVELHSSVEYVVWFLGFQPGFPYLGSLPEQLHTPRRAEPRLLVPAGSVGIGGPQTGVYPLATPGGWQLIGHTSLSLFDPARDEPILLRPGDSVRFVPQKEGVC.

The protein belongs to the PxpB family. As to quaternary structure, forms a complex composed of PxpA, PxpB and PxpC.

It catalyses the reaction 5-oxo-L-proline + ATP + 2 H2O = L-glutamate + ADP + phosphate + H(+). In terms of biological role, catalyzes the cleavage of 5-oxoproline to form L-glutamate coupled to the hydrolysis of ATP to ADP and inorganic phosphate. This Escherichia coli O157:H7 protein is 5-oxoprolinase subunit B.